A 180-amino-acid polypeptide reads, in one-letter code: NAD(P)H-quinone oxidoreductase subunit I, chloroplastic (180 aa).

2 consecutive 4Fe-4S ferredoxin-type domains span residues 55-84 (GRIHFEFDKCIACEVCVRVCPIDLPVVDWK) and 95-124 (LNYSIDFGICIFCGNCVEYCPTNCLSMTEE). 8 residues coordinate [4Fe-4S] cluster: C64, C67, C70, C74, C104, C107, C110, and C114.

This sequence belongs to the complex I 23 kDa subunit family. In terms of assembly, NDH is composed of at least 16 different subunits, 5 of which are encoded in the nucleus. Requires [4Fe-4S] cluster as cofactor.

The protein resides in the plastid. The protein localises to the chloroplast thylakoid membrane. The enzyme catalyses a plastoquinone + NADH + (n+1) H(+)(in) = a plastoquinol + NAD(+) + n H(+)(out). It carries out the reaction a plastoquinone + NADPH + (n+1) H(+)(in) = a plastoquinol + NADP(+) + n H(+)(out). In terms of biological role, NDH shuttles electrons from NAD(P)H:plastoquinone, via FMN and iron-sulfur (Fe-S) centers, to quinones in the photosynthetic chain and possibly in a chloroplast respiratory chain. The immediate electron acceptor for the enzyme in this species is believed to be plastoquinone. Couples the redox reaction to proton translocation, and thus conserves the redox energy in a proton gradient. The protein is NAD(P)H-quinone oxidoreductase subunit I, chloroplastic of Nandina domestica (Heavenly bamboo).